Reading from the N-terminus, the 352-residue chain is Glycerol-3-phosphate dehydrogenase 1-like protein (352 aa).

G13 to G18 is an NAD(+) binding site. K123 contacts substrate. Residue A156 participates in NAD(+) binding. K207 functions as the Proton acceptor in the catalytic mechanism. R272, K299, and Q301 together coordinate NAD(+). R272 to N273 lines the substrate pocket.

Belongs to the NAD-dependent glycerol-3-phosphate dehydrogenase family.

The protein localises to the cytoplasm. It carries out the reaction sn-glycerol 3-phosphate + NAD(+) = dihydroxyacetone phosphate + NADH + H(+). In terms of biological role, plays a role in regulating cardiac sodium current. The chain is Glycerol-3-phosphate dehydrogenase 1-like protein (gpd1l) from Xenopus tropicalis (Western clawed frog).